We begin with the raw amino-acid sequence, 310 residues long: Methionyl-tRNA formyltransferase (310 aa).

A (6S)-5,6,7,8-tetrahydrofolate-binding site is contributed by 109 to 112; that stretch reads SLLP.

Belongs to the Fmt family.

The enzyme catalyses L-methionyl-tRNA(fMet) + (6R)-10-formyltetrahydrofolate = N-formyl-L-methionyl-tRNA(fMet) + (6S)-5,6,7,8-tetrahydrofolate + H(+). Attaches a formyl group to the free amino group of methionyl-tRNA(fMet). The formyl group appears to play a dual role in the initiator identity of N-formylmethionyl-tRNA by promoting its recognition by IF2 and preventing the misappropriation of this tRNA by the elongation apparatus. The chain is Methionyl-tRNA formyltransferase from Pseudomonas putida (strain GB-1).